The primary structure comprises 90 residues: Protein LURE 1.5 (90 aa).

The signal sequence occupies residues 1–19 (MKLPIIFLTLLIFVSSCTS). 2 disulfides stabilise this stretch: C58–C75 and C61–C82.

Belongs to the DEFL family. In terms of tissue distribution, expressed in the pistil. Detected exclusively in the synergid cells.

The protein localises to the secreted. Inactive pollen tube attractants guiding pollen tubes to the ovular micropyle. This Arabidopsis thaliana (Mouse-ear cress) protein is Protein LURE 1.5.